Here is a 321-residue protein sequence, read N- to C-terminus: Phosphatidate cytidylyltransferase, mitochondrial (321 aa).

It belongs to the TAM41 family. Requires Mg(2+) as cofactor. The cofactor is Co(2+). Cu(2+) is required as a cofactor.

Its subcellular location is the mitochondrion inner membrane. The enzyme catalyses a 1,2-diacyl-sn-glycero-3-phosphate + CTP + H(+) = a CDP-1,2-diacyl-sn-glycerol + diphosphate. Its pathway is phospholipid metabolism; CDP-diacylglycerol biosynthesis; CDP-diacylglycerol from sn-glycerol 3-phosphate: step 3/3. Catalyzes the formation of CDP-diacylglycerol (CDP-DAG) from phosphatidic acid (PA) in the mitochondrial inner membrane. Required for the biosynthesis of the dimeric phospholipid cardiolipin, which stabilizes supercomplexes of the mitochondrial respiratory chain in the mitochondrial inner membrane. This Caenorhabditis elegans protein is Phosphatidate cytidylyltransferase, mitochondrial.